Consider the following 298-residue polypeptide: Tyrosine recombinase XerC (298 aa).

Positions 2–88 (TDLHTDVERY…ALRSFFDWLV (87 aa)) constitute a Core-binding (CB) domain. A Tyr recombinase domain is found at 109–288 (HLPKNIDVDD…DFQHLASVYD (180 aa)). Catalysis depends on residues R148, K172, H240, R243, and H266. Y275 functions as the O-(3'-phospho-DNA)-tyrosine intermediate in the catalytic mechanism.

This sequence belongs to the 'phage' integrase family. XerC subfamily. As to quaternary structure, forms a cyclic heterotetrameric complex composed of two molecules of XerC and two molecules of XerD, in which XerC interacts with XerD via its C-terminal region, XerD interacts with XerC via its C-terminal region and so on.

It localises to the cytoplasm. Its activity is regulated as follows. FtsK may regulate the catalytic switch between XerC and XerD in the heterotetrameric complex during the two steps of the recombination process. Site-specific tyrosine recombinase, which acts by catalyzing the cutting and rejoining of the recombining DNA molecules. Binds cooperatively to specific DNA consensus sequences that are separated from XerD binding sites by a short central region, forming the heterotetrameric XerC-XerD complex that recombines DNA substrates. The complex is essential to convert dimers of the bacterial chromosome into monomers to permit their segregation at cell division. It also contributes to the segregational stability of plasmids. In the complex XerC specifically exchanges the top DNA strands. This is Tyrosine recombinase XerC from Escherichia coli O157:H7.